Consider the following 399-residue polypeptide: Argininosuccinate synthase (399 aa).

Ala-12–Ser-20 contributes to the ATP binding site. Tyr-90 contacts L-citrulline. Residue Gly-120 coordinates ATP. L-aspartate is bound by residues Thr-122, Asn-126, and Asp-127. An L-citrulline-binding site is contributed by Asn-126. The L-citrulline site is built by Arg-130, Ser-175, Glu-260, and Tyr-272.

It belongs to the argininosuccinate synthase family. Type 1 subfamily. In terms of assembly, homotetramer.

It localises to the cytoplasm. The catalysed reaction is L-citrulline + L-aspartate + ATP = 2-(N(omega)-L-arginino)succinate + AMP + diphosphate + H(+). It participates in amino-acid biosynthesis; L-arginine biosynthesis; L-arginine from L-ornithine and carbamoyl phosphate: step 2/3. The sequence is that of Argininosuccinate synthase from Methanothermobacter thermautotrophicus (strain ATCC 29096 / DSM 1053 / JCM 10044 / NBRC 100330 / Delta H) (Methanobacterium thermoautotrophicum).